Consider the following 466-residue polypeptide: Asparagine--tRNA ligase (466 aa).

It belongs to the class-II aminoacyl-tRNA synthetase family. In terms of assembly, homodimer.

The protein resides in the cytoplasm. It catalyses the reaction tRNA(Asn) + L-asparagine + ATP = L-asparaginyl-tRNA(Asn) + AMP + diphosphate + H(+). This Escherichia coli O139:H28 (strain E24377A / ETEC) protein is Asparagine--tRNA ligase.